We begin with the raw amino-acid sequence, 300 residues long: Ribosomal RNA small subunit methyltransferase H (300 aa).

S-adenosyl-L-methionine is bound by residues G33–H35, D53, F78, D97, and Q104.

Belongs to the methyltransferase superfamily. RsmH family.

Its subcellular location is the cytoplasm. It carries out the reaction cytidine(1402) in 16S rRNA + S-adenosyl-L-methionine = N(4)-methylcytidine(1402) in 16S rRNA + S-adenosyl-L-homocysteine + H(+). Its function is as follows. Specifically methylates the N4 position of cytidine in position 1402 (C1402) of 16S rRNA. The chain is Ribosomal RNA small subunit methyltransferase H from Karelsulcia muelleri (strain GWSS) (Sulcia muelleri).